The sequence spans 307 residues: Serine/threonine-protein phosphatase 4 catalytic subunit (307 aa).

Mn(2+) is bound by residues Asp54, His56, Asp82, and Asn114. The Proton donor role is filled by His115. His164 and His238 together coordinate Mn(2+). Leu307 is modified (leucine methyl ester).

Belongs to the PPP phosphatase family. PP-4 (PP-X) subfamily. Serine/threonine-protein phosphatase 4 (PP4) occurs in different assemblies of the catalytic and one or more regulatory subunits. It depends on Mn(2+) as a cofactor.

Its subcellular location is the cytoplasm. It localises to the nucleus. It is found in the cytoskeleton. The protein resides in the microtubule organizing center. The protein localises to the centrosome. It carries out the reaction O-phospho-L-seryl-[protein] + H2O = L-seryl-[protein] + phosphate. The enzyme catalyses O-phospho-L-threonyl-[protein] + H2O = L-threonyl-[protein] + phosphate. Functionally, protein phosphatase that regulates many processes such as microtubule organization at centrosomes. The chain is Serine/threonine-protein phosphatase 4 catalytic subunit (ppp4c) from Xenopus laevis (African clawed frog).